Consider the following 558-residue polypeptide: Adenine deaminase (558 aa).

It belongs to the metallo-dependent hydrolases superfamily. Adenine deaminase family. Requires Mn(2+) as cofactor.

The catalysed reaction is adenine + H2O + H(+) = hypoxanthine + NH4(+). This Deinococcus deserti (strain DSM 17065 / CIP 109153 / LMG 22923 / VCD115) protein is Adenine deaminase.